Reading from the N-terminus, the 100-residue chain is Elicitin Vex2 (100 aa).

Intrachain disulfides connect Cys-3–Cys-71, Cys-27–Cys-56, and Cys-51–Cys-95.

Belongs to the elicitin family.

It localises to the secreted. In terms of biological role, induces local and distal defense responses (incompatible hypersensitive reaction) in plants from the solanaceae and cruciferae families. Elicits leaf necrosis and causes the accumulation of pathogenesis-related proteins. Might interact with the lipidic molecules of the plasma membrane. The polypeptide is Elicitin Vex2 (Phytopythium vexans (Damping-off fungus)).